A 1653-amino-acid chain; its full sequence is MKKLRVAACMLMLALAGCDNNDNAPTAVKKDAPSEVTKAASSENASSAKLSVPERQKLAQQSAGKVLTLLDLSEVQLDGAATLVLTFSIPLDPDQDFSRVIHVVDKKSGKVDGAWELSDNLKELRLRHLEPKRDLIVTIGKEVKALNNATFSKDYEKTITTRDIQPSVGFASRGSLLPGKVVEGLPVMALNVNNVDVNFFRVKPESLPAFISQWEYRNSLANWQSDKLLQMADLVYTGRFDLNPARNTREKLLLPLGDIKPLQQAGVYLAVMNQAGRYDYSNPATLFTLSDIGVSAHRYHNRLDIFTQSLENGAAQQGIEVSLLNEKGQTLTQATSDAQGHVQLENDKNAALLLARKDGQTTLLDLKLPALDLAEFNIAGAPGYSKQFFMFGPRDLYRPGETVILNGLLRDADGKALPNQPIKLDVIKPDGQVLRSVVSQPENGLYHFTWPLDSNAATGMWHIRANTGDNQYRMWDFHVEDFMPERMALNLTGEKTPLTPKDEVKFSVVGYYLYGAPANGNTLQGQLFLRPLREAVSALPGFEFGDIAAENLSRTLDEVQLTLDDKGRGEVSTESQWKETHSPLQVIFQGSLLESGGRPVTRRAEQAIWPADALPGIRPQFASKSVYDYRTDSTVKQPIVDEGSNAAFDIVYSDAQGVKKAVSGLQVRLIRERRDYYWNWSEDEGWQSQFDQKDLIENEQTLDLKADETGKVSFPVEWGAYRLEVKAPNEAVSSVRFWAGYSWQDNSDGSGAVRPDRVTLKLDKASYRPGDTIKLHIAAPTAGKGYAMVESSEGPLWWQEIDVRAQGLDLTIPVDKTWNRHDLYLSTLVVRPGDKSRSATPKRAVGVLHLPLGDENRRLDLALETPAKMRPNQPLTVKIKASTKNGEKPKQVNVLVSAVDSGVLNITDYVTPDPWQAFFGQKRYGADIYDIYGQVIEGQGRLAALRFGGDGDELKRGGKPPVNHVNIVVQQALPVTLNEQGEGSVTLPIGDFNGELRVMAQAWTADDFGSNESKVIVAAPVIAELNMPRFMASGDTSRLTLDITNLTDKPQKLNVALTASGLLELVSDSPAAVELAPGVRTTLFIPVRALPGYGDGEIQATISGLALPGETVADQHKQWKIGVRPAFPAQTVNYGTALQPGETWAIPADGLQNFSPVTLEGQLLLSGKPPLNIARYIKELKAYPYGCLEQTASGLFPSLYTNAAQLQALGIKGDSDEKRRASVDIGISRLLQMQRDNGGFALWDKNGDEEYWLTAYVMDFLVRAGEQGYSVPTDAINRGNERLLRYLQDPGMMSIPYADNLKASKFAVQSYAALVLARQQKAPLGALREIWEHRADAASGLPLLQLGVALKTMGDATRGEEAIALALKTPRNSDERIWLGDYGSSLRDNALMLSLLEENKLLPDEQYTLLNTLSQQAFGERWLSTQESNALFLAARTIQDLPGKWQAQTSFSAEQLTGEKAQNSNLNSDQLVTLQVSNSGDQPLWLRMDASGYPQSAPLPANNVLQIERHILGTDGKSKSLDSLRSGDLVLVWLQVKASNSVPDALVVDLLPAGLELENQNLANGSASLEQSGGEVQNLLNQMQQASIKHIEFRDDRFVAAVAVDEYQPVTLVYLARAVTPGTYQVPQPMVESMYVPQWRATGAAEDLLIVRP.

The signal sequence occupies residues 1-17 (MKKLRVAACMLMLALAG). The N-palmitoyl cysteine moiety is linked to residue C18. Residue C18 is the site of S-diacylglycerol cysteine attachment. The isoglutamyl cysteine thioester (Cys-Gln) cross-link spans 1187–1190 (CLEQ). The stretch at 1559–1589 (NQNLANGSASLEQSGGEVQNLLNQMQQASIK) forms a coiled coil.

Belongs to the protease inhibitor I39 (alpha-2-macroglobulin) family. Bacterial alpha-2-macroglobulin subfamily. May form homooligomers.

It localises to the cell inner membrane. Its function is as follows. Protects the bacterial cell from host peptidases. Acts by a 'trapping' mechanism. Cleavage of the bait-region domain by host peptidases leads to a global conformational change, which results in entrapment of the host peptidase and activation of the thioester bond that covalently binds the attacking host peptidase. Trapped peptidases are still active except against very large substrates. May protect the entire periplam, including the lipoproteins anchored to the periplasmic side of the outer membrane, against intruding endopeptidases. This is Alpha-2-macroglobulin (yfhM) from Escherichia coli (strain K12).